A 176-amino-acid polypeptide reads, in one-letter code: NAD(P)H-quinone oxidoreductase subunit 6, chloroplastic (176 aa).

5 helical membrane passes run 10–30 (FLLVFLGSGLLFGSIGVVLFT), 32–52 (PIFSAFSLGFVLVCISLLYIL), 61–81 (AQLLIYVGAITVLIIFAVMFM), 95–115 (VGDGITSLICTTILFSLISTI), and 152–172 (FFLPFELISIILLVALIGAIS).

It belongs to the complex I subunit 6 family. As to quaternary structure, NDH is composed of at least 16 different subunits, 5 of which are encoded in the nucleus.

Its subcellular location is the plastid. It is found in the chloroplast thylakoid membrane. It carries out the reaction a plastoquinone + NADH + (n+1) H(+)(in) = a plastoquinol + NAD(+) + n H(+)(out). It catalyses the reaction a plastoquinone + NADPH + (n+1) H(+)(in) = a plastoquinol + NADP(+) + n H(+)(out). In terms of biological role, NDH shuttles electrons from NAD(P)H:plastoquinone, via FMN and iron-sulfur (Fe-S) centers, to quinones in the photosynthetic chain and possibly in a chloroplast respiratory chain. The immediate electron acceptor for the enzyme in this species is believed to be plastoquinone. Couples the redox reaction to proton translocation, and thus conserves the redox energy in a proton gradient. This Aethionema grandiflorum (Persian stone-cress) protein is NAD(P)H-quinone oxidoreductase subunit 6, chloroplastic (ndhG).